Consider the following 611-residue polypeptide: Dihydroxy-acid dehydratase (611 aa).

Asp81 contacts Mg(2+). Residue Cys122 coordinates [2Fe-2S] cluster. Mg(2+)-binding residues include Asp123 and Lys124. Position 124 is an N6-carboxylysine (Lys124). Cys195 contributes to the [2Fe-2S] cluster binding site. Residue Glu491 coordinates Mg(2+). Ser517 (proton acceptor) is an active-site residue.

Belongs to the IlvD/Edd family. As to quaternary structure, homodimer. Requires [2Fe-2S] cluster as cofactor. The cofactor is Mg(2+).

It catalyses the reaction (2R)-2,3-dihydroxy-3-methylbutanoate = 3-methyl-2-oxobutanoate + H2O. The enzyme catalyses (2R,3R)-2,3-dihydroxy-3-methylpentanoate = (S)-3-methyl-2-oxopentanoate + H2O. The protein operates within amino-acid biosynthesis; L-isoleucine biosynthesis; L-isoleucine from 2-oxobutanoate: step 3/4. It functions in the pathway amino-acid biosynthesis; L-valine biosynthesis; L-valine from pyruvate: step 3/4. Functionally, functions in the biosynthesis of branched-chain amino acids. Catalyzes the dehydration of (2R,3R)-2,3-dihydroxy-3-methylpentanoate (2,3-dihydroxy-3-methylvalerate) into 2-oxo-3-methylpentanoate (2-oxo-3-methylvalerate) and of (2R)-2,3-dihydroxy-3-methylbutanoate (2,3-dihydroxyisovalerate) into 2-oxo-3-methylbutanoate (2-oxoisovalerate), the penultimate precursor to L-isoleucine and L-valine, respectively. The chain is Dihydroxy-acid dehydratase from Actinobacillus pleuropneumoniae serotype 5b (strain L20).